The chain runs to 141 residues: Large ribosomal subunit protein uL11 (141 aa).

This sequence belongs to the universal ribosomal protein uL11 family. In terms of assembly, part of the ribosomal stalk of the 50S ribosomal subunit. Interacts with L10 and the large rRNA to form the base of the stalk. L10 forms an elongated spine to which L12 dimers bind in a sequential fashion forming a multimeric L10(L12)X complex. One or more lysine residues are methylated.

Forms part of the ribosomal stalk which helps the ribosome interact with GTP-bound translation factors. The sequence is that of Large ribosomal subunit protein uL11 from Lactococcus lactis subsp. cremoris (strain MG1363).